Here is a 124-residue protein sequence, read N- to C-terminus: Small ribosomal subunit protein uS11 (124 aa).

The protein belongs to the universal ribosomal protein uS11 family. In terms of assembly, part of the 30S ribosomal subunit. Interacts with proteins S7 and S18. Binds to IF-3.

Functionally, located on the platform of the 30S subunit, it bridges several disparate RNA helices of the 16S rRNA. Forms part of the Shine-Dalgarno cleft in the 70S ribosome. This is Small ribosomal subunit protein uS11 from Anaplasma phagocytophilum (strain HZ).